The sequence spans 393 residues: S-adenosylmethionine synthase 1 (393 aa).

Glu9 is a binding site for Mg(2+). Residue His15 coordinates ATP. Glu43 serves as a coordination point for K(+). L-methionine contacts are provided by Glu56 and Gln99. ATP-binding positions include Asp167–Lys169, Ser235–Phe238, Asp246, Arg252–Lys253, Ala269, Lys273, and Lys277. L-methionine is bound at residue Asp246. Lys277 contributes to the L-methionine binding site.

It belongs to the AdoMet synthase family. Homotetramer. Mn(2+) serves as cofactor. It depends on Mg(2+) as a cofactor. Co(2+) is required as a cofactor. Requires K(+) as cofactor.

The protein resides in the cytoplasm. The enzyme catalyses L-methionine + ATP + H2O = S-adenosyl-L-methionine + phosphate + diphosphate. Its pathway is amino-acid biosynthesis; S-adenosyl-L-methionine biosynthesis; S-adenosyl-L-methionine from L-methionine: step 1/1. Functionally, catalyzes the formation of S-adenosylmethionine from methionine and ATP. The reaction comprises two steps that are both catalyzed by the same enzyme: formation of S-adenosylmethionine (AdoMet) and triphosphate, and subsequent hydrolysis of the triphosphate. This is S-adenosylmethionine synthase 1 (METK1) from Solanum tuberosum (Potato).